The chain runs to 505 residues: 2,3-bisphosphoglycerate-independent phosphoglycerate mutase (505 aa).

Positions 15 and 65 each coordinate Mn(2+). S65 (phosphoserine intermediate) is an active-site residue. Substrate is bound by residues H126, 156–157 (RD), R187, R193, 260–263 (RPDR), and K333. The Mn(2+) site is built by D398, H402, D439, H440, and H457.

It belongs to the BPG-independent phosphoglycerate mutase family. Monomer. Mn(2+) serves as cofactor.

It carries out the reaction (2R)-2-phosphoglycerate = (2R)-3-phosphoglycerate. The protein operates within carbohydrate degradation; glycolysis; pyruvate from D-glyceraldehyde 3-phosphate: step 3/5. In terms of biological role, catalyzes the interconversion of 2-phosphoglycerate and 3-phosphoglycerate. This is 2,3-bisphosphoglycerate-independent phosphoglycerate mutase from Mycoplasmopsis pulmonis (strain UAB CTIP) (Mycoplasma pulmonis).